A 1331-amino-acid polypeptide reads, in one-letter code: MPPRKKPKSSALKSNKQSSANHSSQPSTFGIQQLFLRHIQNSQSTSNSHTSTADPVDQQNVNGLASDTAVLTPQNPLGTSNEKPDESKDMDQQLTEASPKISKNLKRFSPGMLIKQSQDDCGGEITWKISPVNERLRAAAKNIPKMMDLTENSLGVKSSTIRPCSLNKLVQKQCPTSGITSKVEQWLSSPSKKASKRPAFATNRVMERVNPSPDAEFEIVNTSSSGNSPFQTPPSLSCPHNKLPCTVTCSGACGSMGAGQHKKALLELLDQVEDVIAVDDKTTDDVGIVMPQARVKDDIISSVVDCAVDEGPVSLPKMQNSINPDSYFLVLEVSEKRGSGSSSKGQCPYKVLRLLDEHTGVECALYLWDEWFYSTVSPGDSINVIGEFDGDGKCDVDRQNNFLIVHPDTLVAGTRVAASFGCPRRTVLDERLRSNEHATVALLGTLQHQVFQAGLSQESPSVDGLQEYASTVIEKSIESLYACGVHEGDVRSTLFKAIPKMLNWIEHFRYSKDSEVSKVDFGSTIGKKAVKVSEVIDIEEMSWAPKYGLKGMIDASVRVIVESDMNTVNEKIMPLEFKSGKAPSGQSSIEHSAQVILYTLLMSERYLKHIDNGLLYYLQSDQTQGISVQRSDLVGLIIRRNELANDILVASTTQQLPPMLRNPNICRNCRHLDVCTIYHKADGGNTESSGLGDVFDTHVSHLSTLHFNFLRHWDRLIDLEGREMQLLRKDIAHPHGSKGSHSASYLSSMVLDVTNGFQHHNSHKETRFIYRFVRQKSSESRERVTSEDMIRTGNLATDDLDCKLRTGDRVILRTEVSHLTVANGIIADISRTHISVSLSKRLRLPWSEPSSEVSNLSHELWRIYKDEFMTSFSVMRFNLMQLFVQNGHNIRKMIVDLEPPRFDNGSILSQDPAISYIWSEKSLNNDQRQAILKILTAKDYALILGMPGTGKTSTMVHAVKALLIRGSSILLASYTNSAVDNLLIKLKAQGIEFLRIGRDEAVHEEVRESCFSAMNMCSVEDIKKKLDQVKVVASTCLGINSPLLVNRRFDVCIIDEAGQIALPVSIGPLLFASTFVLVGDHYQLPPLVQSTEARENGMGISLFRRLSEAHPQAISVLQNQYRMCRGIMELSNALIYGDRLCCGSAEVADATLVLSTSSSTSPWLKKVLEPTRTVVFVNTDMLRAFEARDQNAINNPVEASIIAEIVEELVNNGVDSKDIGIITPYNSQASLIQHAIPTTPVEIHTIDKYQGRDKDCILVSFVRSREKPRSSASSLLGDWHRINVALTRAKKKLIMVGSQRTLSRVPLLMLLLNKVKEQSGILNLLPGDLKP.

The tract at residues 1 to 98 (MPPRKKPKSS…DMDQQLTEAS (98 aa)) is disordered. Positions 2-8 (PPRKKPK) match the Nuclear localization signal motif. Residues 11-31 (ALKSNKQSSANHSSQPSTFGI) are compositionally biased toward polar residues. A compositionally biased stretch (low complexity) spans 40–52 (QNSQSTSNSHTST). The span at 57-81 (DQQNVNGLASDTAVLTPQNPLGTSN) shows a compositional bias: polar residues. The span at 82 to 91 (EKPDESKDMD) shows a compositional bias: basic and acidic residues. A nuclease activity region spans residues 362–811 (ECALYLWDEW…CKLRTGDRVI (450 aa)). [4Fe-4S] cluster is bound by residues C422, C666, C669, and C675. The helicase activity stretch occupies residues 812–1331 (LRTEVSHLTV…LNLLPGDLKP (520 aa)). The 348-residue stretch at 924 to 1271 (NNDQRQAILK…VRSREKPRSS (348 aa)) folds into the UvrD-like helicase ATP-binding domain. 945 to 952 (GMPGTGKT) contacts ATP.

Belongs to the DNA2/NAM7 helicase family. [4Fe-4S] cluster serves as cofactor. As to expression, strongly expressed in meristems, including both root and shoot apical meristems (RAM and SAM). Also present in the vasculature and in young floral tissues.

It is found in the nucleus. The protein localises to the chromosome. It catalyses the reaction ATP + H2O = ADP + phosphate + H(+). Its function is as follows. Essential protein required during embryogenesis. Key enzyme involved in DNA replication and damage repair, shoot apical meristem (SAM) maintenance, and development. Involved in Okazaki fragments processing. Possesses different enzymatic activities, such as single-stranded DNA (ssDNA)-dependent ATPase, 5'-3' helicase and endonuclease activities. While the ATPase and endonuclease activities are well-defined and play a key role in Okazaki fragments processing and DSB repair, the 5'-3' DNA helicase activity is atypical: it cannot load onto its tracking strand internally and has an absolute free 5'-end requirement. This chain is DNA replication ATP-dependent helicase/nuclease JHS1, found in Arabidopsis thaliana (Mouse-ear cress).